We begin with the raw amino-acid sequence, 500 residues long: Aspartyl/glutamyl-tRNA(Asn/Gln) amidotransferase subunit B (500 aa).

The protein belongs to the GatB/GatE family. GatB subfamily. Heterotrimer of A, B and C subunits.

The catalysed reaction is L-glutamyl-tRNA(Gln) + L-glutamine + ATP + H2O = L-glutaminyl-tRNA(Gln) + L-glutamate + ADP + phosphate + H(+). It carries out the reaction L-aspartyl-tRNA(Asn) + L-glutamine + ATP + H2O = L-asparaginyl-tRNA(Asn) + L-glutamate + ADP + phosphate + 2 H(+). Functionally, allows the formation of correctly charged Asn-tRNA(Asn) or Gln-tRNA(Gln) through the transamidation of misacylated Asp-tRNA(Asn) or Glu-tRNA(Gln) in organisms which lack either or both of asparaginyl-tRNA or glutaminyl-tRNA synthetases. The reaction takes place in the presence of glutamine and ATP through an activated phospho-Asp-tRNA(Asn) or phospho-Glu-tRNA(Gln). The polypeptide is Aspartyl/glutamyl-tRNA(Asn/Gln) amidotransferase subunit B (Allorhizobium ampelinum (strain ATCC BAA-846 / DSM 112012 / S4) (Agrobacterium vitis (strain S4))).